Reading from the N-terminus, the 494-residue chain is Integrin beta-like protein 1 (494 aa).

Residues 1–23 form the signal peptide; it reads MHPPGFKNFLLLVSSLFFIGLSA. Intrachain disulfides connect Cys-40–Cys-71, Cys-51–Cys-69, Cys-63–Cys-74, Cys-76–Cys-89, Cys-91–Cys-112, Cys-96–Cys-110, Cys-104–Cys-115, Cys-117–Cys-126, Cys-132–Cys-159, Cys-143–Cys-157, Cys-151–Cys-162, Cys-164–Cys-178, Cys-180–Cys-202, Cys-185–Cys-200, Cys-194–Cys-205, Cys-207–Cys-216, Cys-220–Cys-247, Cys-231–Cys-245, Cys-239–Cys-250, Cys-252–Cys-269, Cys-271–Cys-296, Cys-276–Cys-294, Cys-288–Cys-299, Cys-301–Cys-310, Cys-316–Cys-343, Cys-327–Cys-341, Cys-335–Cys-346, Cys-348–Cys-361, Cys-363–Cys-384, Cys-368–Cys-382, Cys-376–Cys-387, Cys-389–Cys-398, Cys-404–Cys-431, Cys-415–Cys-429, Cys-423–Cys-434, Cys-436–Cys-448, Cys-450–Cys-471, Cys-455–Cys-469, Cys-463–Cys-474, and Cys-476–Cys-485. I-EGF domains are found at residues 40–90, 91–127, 132–179, 180–217, 220–270, 271–311, 316–362, 363–399, 404–449, and 450–486; these read CRLS…PLCE, CHDWVCETYDGKTCAGHGTCDCGKCKCDVGWSGEACQ, CDLT…KFCE, CDDRECIDDETEEICGGHGKCYCGNCYCEAGWHGDKCE, CDIT…DTCE, CDER…KKCE, CPLS…KTCE, CDDRRCEDLDGVVCGGRGTCSCGRCVCEKGWFGKLCQ, CNMT…EFCD, and CDDRDCDKHDGLICTGNGICSCGNCECWDGWNGNACE. Residues 51-95 form an I repeat; sequence CRAPGQPPGSALCHDRGRCECGVCICHVTEPGTYFGPLCECHDWV. The tract at residues 51–494 is cysteine-rich tandem repeats; that stretch reads CRAPGQPPGS…CEIWLGTEYP (444 aa). An II repeat occupies 96 to 142; sequence CETYDGKTCAGHGTCDCGKCKCDVGWSGEACQYPTKCDLTKKISNQM. Residues 143-184 form an III repeat; it reads CKNSQDVICSNAGTCHCGRCKCDNSDGHGLIYGKFCECDDRE. One copy of the IV repeat lies at 185–230; sequence CIDDETEEICGGHGKCYCGNCYCEAGWHGDKCEFQCDITPWESKRR. Residues 231-275 form a V repeat; that stretch reads CTSPDGKVCSNRGTCVCGECSCHDVDPTGDWGDIHGDTCECDERD. The stretch at 276–326 is one VI repeat; that stretch reads CRAVYDRYSDDFCSGHGQCNCGRCDCRAGWYGKKCEHPKNCPLSAEESTRK. One copy of the VII repeat lies at 327–367; it reads CQGSSDLPCSGRGRCECGRCTCYPPGDSRVYGKTCECDDRR. The stretch at 368–414 is one VIII repeat; it reads CEDLDGVVCGGRGTCSCGRCVCEKGWFGKLCQHPRKCNMTEEQSRSL. A glycan (N-linked (GlcNAc...) asparagine) is linked at Asn-405. Residues 415–454 form an IX repeat; sequence CESADGTLCSGKGSCHCGKCICSGEEWYISGEFCDCDDRD. One copy of the X repeat lies at 455–494; the sequence is CDKHDGLICTGNGICSCGNCECWDGWNGNACEIWLGTEYP.

The protein localises to the secreted. This Rattus norvegicus (Rat) protein is Integrin beta-like protein 1 (Itgbl1).